A 262-amino-acid polypeptide reads, in one-letter code: Hydroxyethylthiazole kinase (262 aa).

A substrate-binding site is contributed by methionine 44. ATP-binding residues include arginine 118 and threonine 166. Glycine 193 contributes to the substrate binding site.

The protein belongs to the Thz kinase family. Mg(2+) is required as a cofactor.

The enzyme catalyses 5-(2-hydroxyethyl)-4-methylthiazole + ATP = 4-methyl-5-(2-phosphooxyethyl)-thiazole + ADP + H(+). Its pathway is cofactor biosynthesis; thiamine diphosphate biosynthesis; 4-methyl-5-(2-phosphoethyl)-thiazole from 5-(2-hydroxyethyl)-4-methylthiazole: step 1/1. Functionally, catalyzes the phosphorylation of the hydroxyl group of 4-methyl-5-beta-hydroxyethylthiazole (THZ). This Chlamydia felis (strain Fe/C-56) (Chlamydophila felis) protein is Hydroxyethylthiazole kinase.